Consider the following 170-residue polypeptide: APRG1 tumor suppressor candidate (170 aa).

Residues 150–170 (IALALAGPGAILILELSWFLG) traverse the membrane as a helical segment.

As to expression, expressed at high levels in the pancreas and placenta. Expressed at high levels in the kidney.

Its subcellular location is the membrane. This chain is APRG1 tumor suppressor candidate, found in Homo sapiens (Human).